Here is a 342-residue protein sequence, read N- to C-terminus: Lipopolysaccharide heptosyltransferase 1 (342 aa).

ADP-L-glycero-beta-D-manno-heptose is bound by residues S188, S189, K193, E225, D268, S269, G270, and H273.

This sequence belongs to the glycosyltransferase 9 family.

It localises to the cell inner membrane. The catalysed reaction is an alpha-Kdo-(2-&gt;4)-alpha-Kdo-(2-&gt;6)-lipid A + ADP-L-glycero-beta-D-manno-heptose = an L-alpha-D-Hep-(1-&gt;5)-[alpha-Kdo-(2-&gt;4)]-alpha-Kdo-(2-&gt;6)-lipid A + ADP + H(+). Its pathway is bacterial outer membrane biogenesis; LPS core biosynthesis. In terms of biological role, glycosyltransferase involved in the biosynthesis of the core oligosaccharide region of lipopolysaccharide (LPS). Catalyzes the addition of the first heptose unit to one 3-deoxy-D-manno-octulosonic acid (Kdo) residue of the Kdo2-lipid A module. The sequence is that of Lipopolysaccharide heptosyltransferase 1 from Campylobacter coli.